The chain runs to 565 residues: Small ribosomal subunit protein bS1 (565 aa).

6 consecutive S1 motif domains span residues 30 to 96 (SSVI…LSRD), 114 to 180 (NEKV…VSRR), 201 to 269 (GQVI…LGMK), 286 to 356 (NARF…LGLK), 373 to 443 (GSTV…LGVK), and 454 to 529 (GDVK…VSIK).

The protein belongs to the bacterial ribosomal protein bS1 family. In terms of processing, the initiator methionine may be removed.

Binds mRNA; thus facilitating recognition of the initiation point. It is needed to translate mRNA with a short Shine-Dalgarno (SD) purine-rich sequence. The chain is Small ribosomal subunit protein bS1 (rpsA) from Rhodopseudomonas palustris (strain ATCC BAA-98 / CGA009).